The primary structure comprises 292 residues: MADTIFGSGCDQWVCPNDRQLALRAKLHTGWSVHTYQTEKQRKSQSLSPAEVEAILQVIQRAERLDILEQQRVGRLVERLETMRRNVMGNGLSQCLLCGEVLGFLGSSSVFCKDCRKKVCTKCGIEASPSQKRPLWLCKICSEQREVWKRSGAWFYKGIPKFILPLKIPGQADHPSFRPLPVEPAEQEPRSTETSRVYTWARGRVVSSDSDSDSDLSSSSLDDRLRPAGVRDPKGNKPWGESGGSVESLKMGPTRPASCLSGSQSSLASETGTGSADPQGGPRTLAGPRGPR.

Positions 41–158 constitute a RabBD domain; the sequence is QRKSQSLSPA…KRSGAWFYKG (118 aa). The FYVE-type zinc-finger motif lies at 89–146; the sequence is GNGLSQCLLCGEVLGFLGSSSVFCKDCRKKVCTKCGIEASPSQKRPLWLCKICSEQRE. Residues Cys95, Cys98, Cys112, Cys115, Cys120, Cys123, Cys138, and Cys141 each contribute to the Zn(2+) site. Residues 175-292 are disordered; that stretch reads PSFRPLPVEP…RTLAGPRGPR (118 aa). The span at 221 to 235 shows a compositional bias: basic and acidic residues; sequence LDDRLRPAGVRDPKG. Ser248 bears the Phosphoserine mark. The segment covering 257–269 has biased composition (low complexity); the sequence is ASCLSGSQSSLAS.

As to quaternary structure, recruited to dense-core vesicles through specific interaction with RAB27A in endocrine cells. Interacts with RAB3A, RAB3B, RAB3C and RAB3D. Interacts with ZYX.

The protein resides in the cytoplasm. It localises to the cytoplasmic vesicle. It is found in the secretory vesicle membrane. In terms of biological role, rab GTPase effector involved in the late steps of regulated exocytosis, both in endocrine and exocrine cells. The protein is Rab effector Noc2 (RPH3AL) of Bos taurus (Bovine).